The chain runs to 865 residues: MPMSQPAAPPVLTVRYEGSERTFAAGHDVVVGRDLRADVRVAHPLISRAHLLLRFDQGRWVAIDNGSLNGLYLNNRRVPVVDIYDAQRVHIGNPDGPALDFEVGRHRGSAGRPPQTTSIRLPNLSAGAWPTDGPPQTGTLGSGQLQQLPPATTRIPAAPPSGPQPRYPTGGQQLWPPSGPQRAPQIYRPPTAAPPPAGARGGTEAGNLATSMMKILRPGRLTGELPPGAVRIGRANDNDIVIPEVLASRHHATLVPTPGGTEIRDNRSINGTFVNGARVDAALLHDGDVVTIGNIDLVFADGTLARREENLLETRVGGLDVRGVTWTIDGDKTLLDGISLTARPGMLTAVIGPSGAGKSTLARLVAGYTHPTDGTVTFEGHNVHAEYASLRSRIGMVPQDDVVHGQLTVKHALMYAAELRLPPDTTKDDRTQVVARVLEELEMSKHIDTRVDKLSGGQRKRASVALELLTGPSLLILDEPTSGLDPALDRQVMTMLRQLADAGRVVLVVTHSLTYLDVCDQVLLLAPGGKTAFCGPPTQIGPVMGTTNWADIFSTVADDPDAAKARYLARTGPTPPPPPVEQPAELGDPAHTSLFRQFSTIARRQLRLIVSDRGYFVFLALLPFIMGALSMSVPGDVGFGFPNPMGDAPNEPGQILVLLNVGAVFMGTALTIRDLIGERAIFRREQAVGLSTTAYLIAKVCVYTVLAVVQSAIVTVIVLVGKGGPTQGAVALSKPDLELFVDVAVTCVASAMLGLALSAIAKSNEQIMPLLVVAVMSQLVFSGGMIPVTGRVPLDQMSWVTPARWGFAASAATVDLIKLVPGPLTPKDSHWHHTASAWWFDMAMLVALSVIYVGFVRWKIRLKAC.

Positions 29–78 (VVVGRDLRADVRVAHPLISRAHLLLRFDQGRWVAIDNGSLNGLYLNNRRV) constitute an FHA 1 domain. The interval 104-205 (GRHRGSAGRP…PAGARGGTEA (102 aa)) is disordered. The span at 135–156 (PQTGTLGSGQLQQLPPATTRIP) shows a compositional bias: low complexity. Threonine 152 is subject to Phosphothreonine. Residues 157-166 (AAPPSGPQPR) show a composition bias toward pro residues. Threonine 210 is modified (phosphothreonine). Residues 230–279 (VRIGRANDNDIVIPEVLASRHHATLVPTPGGTEIRDNRSINGTFVNGARV) form the FHA 2 domain. One can recognise an ABC transporter domain in the interval 319–552 (LDVRGVTWTI…VMGTTNWADI (234 aa)). 352–359 (GPSGAGKS) provides a ligand contact to ATP. One can recognise an ABC transmembrane type-2 domain in the interval 596-810 (RQFSTIARRQ…TPARWGFAAS (215 aa)). The next 6 helical transmembrane spans lie at 614-634 (GYFV…MSVP), 652-672 (PGQI…ALTI), 700-720 (VCVY…IVLV), 740-760 (FVDV…LSAI), 767-787 (IMPL…GMIP), and 836-856 (SAWW…VGFV).

This sequence in the central section; belongs to the ABC transporter superfamily. It in the C-terminal section; belongs to the ABC-2 integral membrane protein family. Homodimer. Interacts with PknF. Post-translationally, phosphorylated by PknF. Can probably be phosphorylated in vivo by other kinases when PknF is missing.

It is found in the cell membrane. With respect to regulation, function is positively regulated by phosphorylation. In terms of biological role, involved in the translocation of an unknown substrate across the membrane. Transmembrane domains (TMD) form a pore in the membrane and the ATP-binding domain (NBD) is responsible for energy generation. Required for virulence. The polypeptide is ABC transporter ATP-binding/permease protein Rv1747 (Mycobacterium tuberculosis (strain ATCC 25618 / H37Rv)).